A 279-amino-acid chain; its full sequence is Movement protein (279 aa).

The tract at residues 247–279 (ESEELNVESPPAAIGSSSASRSEAFRPQVVNGL) is disordered. The segment covering 254–268 (ESPPAAIGSSSASRS) has biased composition (low complexity).

The protein belongs to the cucumovirus movement protein family.

The protein resides in the host cell junction. Its subcellular location is the host plasmodesma. Functionally, transports viral genome to neighboring plant cells directly through plasmosdesmata, without any budding. The movement protein allows efficient cell to cell propagation, by bypassing the host cell wall barrier. Acts by forming a tubular structure at the host plasmodesmata, enlarging it enough to allow free passage of virion capsids. This chain is Movement protein, found in Cucumis sativus (Cucumber).